The following is a 603-amino-acid chain: Sabinene hydrate synthase, chloroplastic (603 aa).

The transit peptide at 1-47 (MSTISINHVGLLRNPLHGKSKRASINKSWSLCLPRSSSASRLVKPCR) directs the protein to the chloroplast. Mn(2+) is bound by residues Asp-357 and Asp-361. A DDXXD motif motif is present at residues 357-361 (DDVYD). Homodimerization regions lie at residues 363-369 (YGTLDEL) and 435-472 (EAEW…VSIP). The Mn(2+) site is built by Asp-501 and Glu-509.

Belongs to the terpene synthase family. In terms of assembly, homodimer. Requires Mn(2+) as cofactor. The cofactor is Mg(2+).

It localises to the plastid. The protein resides in the chloroplast. The catalysed reaction is (2E)-geranyl diphosphate + H2O = sabinene hydrate + diphosphate. It functions in the pathway secondary metabolite biosynthesis; terpenoid biosynthesis. Functionally, involved in the biosynthesis of phenolic monoterpenes natural products. Monoterpene synthase which catalyzes the conversion of geranyl diphosphate (GPP) to sabinene hydrate, mainly (Z)-sabinene hydrate and to a lower extent (E)-sabinene hydrate, and the formation of minor amounts and traces of several other monoterpenes (e.g. mainly alpha-thujene, alpha-pinene and myrcene). The protein is Sabinene hydrate synthase, chloroplastic of Thymus vulgaris (Thyme).